Reading from the N-terminus, the 491-residue chain is Cobyric acid synthase (491 aa).

One can recognise a GATase cobBQ-type domain in the interval 253–429 (AHRVAVVRLP…WHGSLEGDAL (177 aa)). The active-site Nucleophile is cysteine 334. Residue histidine 421 is part of the active site.

The protein belongs to the CobB/CobQ family. CobQ subfamily.

Its pathway is cofactor biosynthesis; adenosylcobalamin biosynthesis. Catalyzes amidations at positions B, D, E, and G on adenosylcobyrinic A,C-diamide. NH(2) groups are provided by glutamine, and one molecule of ATP is hydrogenolyzed for each amidation. This chain is Cobyric acid synthase, found in Mycobacterium marinum (strain ATCC BAA-535 / M).